The following is a 172-amino-acid chain: NAD(P)H-quinone oxidoreductase subunit J (172 aa).

The protein belongs to the complex I 30 kDa subunit family. As to quaternary structure, NDH-1 can be composed of about 15 different subunits; different subcomplexes with different compositions have been identified which probably have different functions.

It is found in the cellular thylakoid membrane. It catalyses the reaction a plastoquinone + NADH + (n+1) H(+)(in) = a plastoquinol + NAD(+) + n H(+)(out). The catalysed reaction is a plastoquinone + NADPH + (n+1) H(+)(in) = a plastoquinol + NADP(+) + n H(+)(out). In terms of biological role, NDH-1 shuttles electrons from an unknown electron donor, via FMN and iron-sulfur (Fe-S) centers, to quinones in the respiratory and/or the photosynthetic chain. The immediate electron acceptor for the enzyme in this species is believed to be plastoquinone. Couples the redox reaction to proton translocation, and thus conserves the redox energy in a proton gradient. Cyanobacterial NDH-1 also plays a role in inorganic carbon-concentration. The chain is NAD(P)H-quinone oxidoreductase subunit J from Synechococcus sp. (strain ATCC 27144 / PCC 6301 / SAUG 1402/1) (Anacystis nidulans).